The following is a 148-amino-acid chain: Macrodomain Ter protein (148 aa).

Belongs to the MatP family. Homodimer.

Its subcellular location is the cytoplasm. Its function is as follows. Required for spatial organization of the terminus region of the chromosome (Ter macrodomain) during the cell cycle. Prevents early segregation of duplicated Ter macrodomains during cell division. Binds specifically to matS, which is a 13 bp signature motif repeated within the Ter macrodomain. The chain is Macrodomain Ter protein from Photobacterium profundum (strain SS9).